The primary structure comprises 327 residues: Ankyrin repeat domain-containing protein SOWAHD (327 aa).

The segment at 1 to 31 is disordered; it reads MAQALEDGNPLPKASNRPAESEAPSDPQIKD. ANK repeat units lie at residues 112–141, 147–162, and 186–216; these read CLEP…AEPS, DPIT…AKHG, and PGSG…LGAD. The interval 251–311 is disordered; that stretch reads ERDRKRENAN…EKKASSTQEG (61 aa). Residues 260–275 show a composition bias toward low complexity; that stretch reads NNNSSRTTTTTTTTSR. Over residues 292–305 the composition is skewed to basic and acidic residues; it reads HYKEASQPVKEKKA.

The protein belongs to the SOWAH family.

The chain is Ankyrin repeat domain-containing protein SOWAHD (Sowahd) from Mus musculus (Mouse).